We begin with the raw amino-acid sequence, 264 residues long: Endochitinase At2g43590 (264 aa).

The signal sequence occupies residues Met1–Ser24. The 35-residue stretch at Gln25 to Gly59 folds into the Chitin-binding type-1 domain. 4 cysteine pairs are disulfide-bonded: Cys27/Cys35, Cys29/Cys41, Cys34/Cys48, and Cys52/Cys57. A catalytic region spans residues Gly66–Cys264. Glu128 serves as the catalytic Proton donor. The N-linked (GlcNAc...) asparagine glycan is linked to Asn261.

The protein belongs to the glycosyl hydrolase 19 family. Chitinase class I subfamily.

The enzyme catalyses Random endo-hydrolysis of N-acetyl-beta-D-glucosaminide (1-&gt;4)-beta-linkages in chitin and chitodextrins.. This is Endochitinase At2g43590 from Arabidopsis thaliana (Mouse-ear cress).